A 187-amino-acid polypeptide reads, in one-letter code: MPVDLGKWSGPLSLQEVEERPQHALHVKYTGTEVDELGKVLTPTQVKNRPTSIAWDGLDPGKLYTLVLTDPDAPSRKDPKYREWHHFLVVNMKGNDISSGTVLSDYVGSGPPKGTGLHRYVWLVYEQSGPLKCDEPILSNRSGDHRGKFKVASFRKKYELGPPVAGTCYQAEWDDYVPKLCEQLSGK.

Serine 13 is subject to Phosphoserine. A Phosphothreonine modification is found at threonine 42. A phosphoserine mark is found at serine 52, serine 98, and serine 153. Residues 93–134 (KGNDISSGTVLSDYVGSGPPKGTGLHRYVWLVYEQSGPLKCD) form an interaction with RAF1 region.

It belongs to the phosphatidylethanolamine-binding protein family. As to quaternary structure, has a tendency to form dimers by disulfide cross-linking. Interacts with RAF1 and this interaction is enhanced if RAF1 is phosphorylated on residues 'Ser-338', 'Ser-339', 'Tyr-340' and 'Tyr-341'. Interacts with ALOX15; in response to IL13/interleukin-13, prevents the interaction of PEBP1 with RAF1 to activate the ERK signaling cascade.

Its subcellular location is the cytoplasm. Its function is as follows. Binds ATP, opioids and phosphatidylethanolamine. Has lower affinity for phosphatidylinositol and phosphatidylcholine. Serine protease inhibitor which inhibits thrombin, neuropsin and chymotrypsin but not trypsin, tissue type plasminogen activator and elastase. Involved in the positive regulation of epithelial cell migration. Inhibits the kinase activity of RAF1 by inhibiting its activation and by dissociating the RAF1/MEK complex and acting as a competitive inhibitor of MEK phosphorylation. Functionally, HCNP may be involved in the function of the presynaptic cholinergic neurons of the central nervous system. HCNP increases the production of choline acetyltransferase but not acetylcholinesterase. Seems to be mediated by a specific receptor. This Canis lupus familiaris (Dog) protein is Phosphatidylethanolamine-binding protein 1 (PEBP1).